Here is a 450-residue protein sequence, read N- to C-terminus: Magnesium transporter MgtE (450 aa).

Topologically, residues 1 to 283 (MEEKLAVSLQ…SEAGPVALWL (283 aa)) are cytoplasmic. Residues glutamate 59, aspartate 91, aspartate 95, and glycine 136 each contribute to the Mg(2+) site. 2 consecutive CBS domains span residues 138 to 200 (MTPE…RVAE) and 202 to 258 (MNPK…EATE). ATP-binding residues include tyrosine 170, serine 185, arginine 187, aspartate 188, and valine 207. Mg(2+)-binding residues include glutamate 216, alanine 223, aspartate 226, aspartate 247, aspartate 250, glutamate 255, glutamate 258, and aspartate 259. A Ca(2+)-binding site is contributed by glutamate 275. Residues glutamate 275, glutamine 304, glutamate 307, and glutamate 311 each contribute to the Mn(2+) site. Residues 284-306 (ARVRWLVILILTGMVTSSILQGF) traverse the membrane as a helical segment. At 307–315 (ESVLEAVTA) the chain is on the periplasmic side. Glutamate 311 lines the Ca(2+) pocket. Residues 316–337 (LAFYVPVLLGTGGNTGNQSATL) traverse the membrane as a helical segment. At 338 to 351 (IIRALATRDLDLRD) the chain is on the cytoplasmic side. The helical transmembrane segment at 352–381 (WRRVFLKEMGVGLLLGLTLSFLLVGKVYWD) threads the bilayer. The Periplasmic segment spans residues 382–385 (GHPL). Histidine 383 provides a ligand contact to Mn(2+). Residues 386-409 (LLPVVGVSLVLIVFFANLVGAMLP) traverse the membrane as a helical segment. The Cytoplasmic portion of the chain corresponds to 410–420 (FLLRRLGVDPA). Mg(2+)-binding residues include aspartate 418, alanine 428, and aspartate 432. Residues 421–443 (LVSNPLVATLSDVTGLLIYLSVA) traverse the membrane as a helical segment. The Periplasmic portion of the chain corresponds to 444 to 450 (RLLLEAV).

Belongs to the SLC41A transporter family. Homodimer.

The protein localises to the cell inner membrane. The catalysed reaction is Mg(2+)(in) = Mg(2+)(out). With respect to regulation, the channel activity is regulated via the N-terminal cytoplasmic region, which acts as a Mg(2+) sensor to regulate the gating of the ion-conducting pore in response to the intracellular magnesium concentration. Under high-intracellular magnesium conditions, binding of magnesium to the N-terminal cytoplasmic domain stabilizes the closed conformation of the channel. Under low-intracellular magnesium conditions, the channel is in equilibrium between the open and closed states. A cation-binding site within the membrane (M1) strictly recognizes the size and geometry of the Mg(2+) hydration shells, which may be important for the selective transport of Mg(2+) over other cations. Cation-binding sites on the periplasmic side (M2 and M3) regulate channel opening and prevent conduction of near-cognate cations. Binding of Mn(2+) to the periplasmic sites strongly inhibits the Mg(2+) transport activity. In addition, activity is regulated by ATP, which binds to MgtE and modulates its Mg(2+)-dependent channel gating. ATP binding enhances the intracellular domain affinity for Mg(2+) within physiological concentrations of this divalent cation, enabling MgtE to function as an in vivo Mg(2+) sensor. ATP dissociation from MgtE upregulates Mg(2+) influx at both high and low intracellular Mg(2+) concentrations. Its function is as follows. Highly selective magnesium channel that plays an important role in Mg(2+) homeostasis. Functions as a Mg(2+)-dependent gating channel. Exhibits low activity with cobalt, suggesting that it might also be involved in the uptake of Co(2+) as a micronutrient. Also exhibits low activity with Ca(2+), but it shows almost no activity with Mn(2+). This Thermus thermophilus (strain ATCC 27634 / DSM 579 / HB8) protein is Magnesium transporter MgtE.